A 586-amino-acid polypeptide reads, in one-letter code: MSRSNSIYTEDIEMYPTHNEQHLTREYTKPDGQTKSEKLNFEGAYINSHGTLSKTTTREIEGDLDSETSSHSSDDKVDPTQQITAETKAPYTLLSYGQKWGMVAILTMCGFWSSLGSPIYYPALRQLEKQFNVDENMVNVTVVVYLLFQGISPTVSGGLADCFGRRPIILAGMLIYVIASIGLACAPSYGVIIFLRCIQSIGISPTIAISSGVVGDFTLKHERGTFVGATSGFVLLGQCFGSLIGAVLTARWDWRAIFWFLTIGCGSCFLIAFLILPETKRTIAGNLSIKPKRFINRAPIFLLGPVRRRFKYDNPDYETLDPTIPKLDLSSAGKILVLPEIILSLFPSGLLFAMWTLMLSSISSGLSVAPYNYHLVIIGVCYLPGGIGGLMGSFFTGRIIDMYFKRKIKKFEQDKANGLIPQDAEINMFKVRLVCLLPQNFLAVVAYLLFGWSIDKGWRIESILITSFVCSYCAMSTLSTSTTLLVDLYPTKSSTASSCFNFVRCSLSTIFMGCFAKMKAAMTVGGTFTFLCALVFFFNFLMFIPMKYGMKWREDRLLKQQRQSWLNTLAVKAKKGTKRDQNDNHN.

Disordered stretches follow at residues 1 to 44 (MSRS…FEGA) and 61 to 82 (EGDL…PTQQ). Over 1–99 (MSRSNSIYTE…PYTLLSYGQK (99 aa)) the chain is Extracellular. Over residues 19 to 40 (NEQHLTREYTKPDGQTKSEKLN) the composition is skewed to basic and acidic residues. Residues 100–120 (WGMVAILTMCGFWSSLGSPIY) form a helical membrane-spanning segment. Residues 121–139 (YPALRQLEKQFNVDENMVN) lie on the Cytoplasmic side of the membrane. A helical membrane pass occupies residues 140-160 (VTVVVYLLFQGISPTVSGGLA). Topologically, residues 161 to 166 (DCFGRR) are extracellular. A helical transmembrane segment spans residues 167-187 (PIILAGMLIYVIASIGLACAP). Residue Ser-188 is a topological domain, cytoplasmic. Residues 189 to 209 (YGVIIFLRCIQSIGISPTIAI) form a helical membrane-spanning segment. Topologically, residues 210-225 (SSGVVGDFTLKHERGT) are extracellular. Residues 226-246 (FVGATSGFVLLGQCFGSLIGA) form a helical membrane-spanning segment. Topologically, residues 247 to 255 (VLTARWDWR) are cytoplasmic. A helical transmembrane segment spans residues 256–276 (AIFWFLTIGCGSCFLIAFLIL). Topologically, residues 277–334 (PETKRTIAGNLSIKPKRFINRAPIFLLGPVRRRFKYDNPDYETLDPTIPKLDLSSAGK) are extracellular. The chain crosses the membrane as a helical span at residues 335 to 355 (ILVLPEIILSLFPSGLLFAMW). Residues 356 to 374 (TLMLSSISSGLSVAPYNYH) lie on the Cytoplasmic side of the membrane. A helical transmembrane segment spans residues 375–395 (LVIIGVCYLPGGIGGLMGSFF). Topologically, residues 396–433 (TGRIIDMYFKRKIKKFEQDKANGLIPQDAEINMFKVRL) are extracellular. Residues 434-454 (VCLLPQNFLAVVAYLLFGWSI) form a helical membrane-spanning segment. At 455 to 459 (DKGWR) the chain is on the cytoplasmic side. The chain crosses the membrane as a helical span at residues 460 to 480 (IESILITSFVCSYCAMSTLST). The Extracellular portion of the chain corresponds to 481 to 523 (STTLLVDLYPTKSSTASSCFNFVRCSLSTIFMGCFAKMKAAMT). The chain crosses the membrane as a helical span at residues 524–544 (VGGTFTFLCALVFFFNFLMFI). At 545–586 (PMKYGMKWREDRLLKQQRQSWLNTLAVKAKKGTKRDQNDNHN) the chain is on the cytoplasmic side.

Belongs to the major facilitator superfamily. CAR1 family.

It localises to the membrane. Functionally, probable transporter that confers resistance to short-chain monocarboxylic acids and quinidine. The sequence is that of Probable transporter AQR1 (AQR1) from Saccharomyces cerevisiae (strain ATCC 204508 / S288c) (Baker's yeast).